The primary structure comprises 480 residues: Glutamyl-tRNA(Gln) amidotransferase subunit A (480 aa).

Catalysis depends on charge relay system residues lysine 70 and serine 145. Residue serine 169 is the Acyl-ester intermediate of the active site.

The protein belongs to the amidase family. GatA subfamily. In terms of assembly, heterotrimer of A, B and C subunits.

It carries out the reaction L-glutamyl-tRNA(Gln) + L-glutamine + ATP + H2O = L-glutaminyl-tRNA(Gln) + L-glutamate + ADP + phosphate + H(+). Allows the formation of correctly charged Gln-tRNA(Gln) through the transamidation of misacylated Glu-tRNA(Gln) in organisms which lack glutaminyl-tRNA synthetase. The reaction takes place in the presence of glutamine and ATP through an activated gamma-phospho-Glu-tRNA(Gln). This Lactobacillus delbrueckii subsp. bulgaricus (strain ATCC 11842 / DSM 20081 / BCRC 10696 / JCM 1002 / NBRC 13953 / NCIMB 11778 / NCTC 12712 / WDCM 00102 / Lb 14) protein is Glutamyl-tRNA(Gln) amidotransferase subunit A.